The primary structure comprises 111 residues: Phosphoribosyl-ATP pyrophosphatase (111 aa).

This sequence belongs to the PRA-PH family.

Its subcellular location is the cytoplasm. The catalysed reaction is 1-(5-phospho-beta-D-ribosyl)-ATP + H2O = 1-(5-phospho-beta-D-ribosyl)-5'-AMP + diphosphate + H(+). Its pathway is amino-acid biosynthesis; L-histidine biosynthesis; L-histidine from 5-phospho-alpha-D-ribose 1-diphosphate: step 2/9. The polypeptide is Phosphoribosyl-ATP pyrophosphatase (Pseudomonas putida (strain GB-1)).